Reading from the N-terminus, the 153-residue chain is Arginine repressor (153 aa).

The protein belongs to the ArgR family.

Its subcellular location is the cytoplasm. The protein operates within amino-acid biosynthesis; L-arginine biosynthesis [regulation]. In terms of biological role, regulates arginine biosynthesis genes. The sequence is that of Arginine repressor from Glaesserella parasuis serovar 5 (strain SH0165) (Haemophilus parasuis).